The primary structure comprises 204 residues: Bombinin-like peptides 1 (204 aa).

A signal peptide (or 18) is located at residues 1–16 (MNFKYIVAVSILIASA). Asparagine amide occurs at positions 70 and 133.

It belongs to the bombinin family. In terms of tissue distribution, expressed by the skin glands.

It is found in the secreted. Has antimicrobial activity, but no hemolytic activity. Preference on killing Gram-negative non-enteric bacteria. This is Bombinin-like peptides 1 from Bombina orientalis (Oriental fire-bellied toad).